The primary structure comprises 215 residues: Probable phosphoglycerate mutase GpmB (215 aa).

Substrate-binding positions include 8–15 (RHGETQWN), 21–22 (QG), Arg-58, Lys-60, 82–85 (ELDM), 104–105 (RR), and 151–152 (GI). The active-site Tele-phosphohistidine intermediate is the His-9. Glu-82 serves as the catalytic Proton donor/acceptor.

It belongs to the phosphoglycerate mutase family. GpmB subfamily.

The enzyme catalyses (2R)-2-phosphoglycerate = (2R)-3-phosphoglycerate. The protein operates within carbohydrate degradation; glycolysis; pyruvate from D-glyceraldehyde 3-phosphate: step 3/5. The protein is Probable phosphoglycerate mutase GpmB of Salmonella choleraesuis (strain SC-B67).